Reading from the N-terminus, the 650-residue chain is Zinc finger CCCH domain-containing protein 55 (650 aa).

The tract at residues 67-162 (NSPSSTPTSP…THSGSADAAG (96 aa)) is disordered. Positions 105 to 128 (SPSSPSSTSPWSFNNCINGNNGNN) are enriched in low complexity. The segment covering 141-154 (PFSSHQSNGLSATH) has biased composition (polar residues). A C3H1-type zinc finger spans residues 232–254 (PCVYFSRGLCKNGESCKFIHGGY). In terms of domain architecture, RRM spans 357–433 (RQIYLTFPAD…RVLVKPYKEK (77 aa)). Residues 566–650 (PVVNPMSVNN…PPVTTNNLMQ (85 aa)) are disordered. The span at 581–590 (AKEETNKSEL) shows a compositional bias: basic and acidic residues.

The protein is Zinc finger CCCH domain-containing protein 55 of Arabidopsis thaliana (Mouse-ear cress).